The sequence spans 265 residues: Phosphatidylglycerol--prolipoprotein diacylglyceryl transferase (265 aa).

The next 7 helical transmembrane spans lie at 17–37, 57–77, 89–109, 127–147, 176–196, 201–218, and 233–253; these read VAVRWYGLMYLLAFVLFVVLG, LLLYGVLGVIIGGRLGEVLFY, ILAVWKGGMSFHGGFLGVLVA, FIAPLVPTGLAAGRIGNFING, QLYQAAGEGLLLFAIVWVFAA, LRAVSAVFLIGYGSLRFV, and LVPGLSTAQWLCVPMVVVGLA. Arg140 contributes to the a 1,2-diacyl-sn-glycero-3-phospho-(1'-sn-glycerol) binding site.

Belongs to the Lgt family.

The protein localises to the cell inner membrane. The catalysed reaction is L-cysteinyl-[prolipoprotein] + a 1,2-diacyl-sn-glycero-3-phospho-(1'-sn-glycerol) = an S-1,2-diacyl-sn-glyceryl-L-cysteinyl-[prolipoprotein] + sn-glycerol 1-phosphate + H(+). The protein operates within protein modification; lipoprotein biosynthesis (diacylglyceryl transfer). Its function is as follows. Catalyzes the transfer of the diacylglyceryl group from phosphatidylglycerol to the sulfhydryl group of the N-terminal cysteine of a prolipoprotein, the first step in the formation of mature lipoproteins. The chain is Phosphatidylglycerol--prolipoprotein diacylglyceryl transferase from Azoarcus sp. (strain BH72).